Reading from the N-terminus, the 70-residue chain is Large ribosomal subunit protein bL31 (70 aa).

Cysteine 16, cysteine 18, cysteine 37, and cysteine 40 together coordinate Zn(2+).

The protein belongs to the bacterial ribosomal protein bL31 family. Type A subfamily. In terms of assembly, part of the 50S ribosomal subunit. The cofactor is Zn(2+).

In terms of biological role, binds the 23S rRNA. The polypeptide is Large ribosomal subunit protein bL31 (Shewanella denitrificans (strain OS217 / ATCC BAA-1090 / DSM 15013)).